The chain runs to 1238 residues: uncharacterized protein (1238 aa).

7 disordered regions span residues 22-83, 96-150, 169-250, 264-694, 739-915, 936-955, and 1057-1089; these read LQSA…QEHL, SSRQ…IASP, FEPD…HQML, QLNS…AAMV, TKAA…SVPE, THSA…APHE, and PKIS…QCSS. Low complexity predominate over residues 35-49; that stretch reads QPPNQQPHQTQQQQQ. Positions 58 to 72 are enriched in polar residues; the sequence is PSIQNLTTNATPTST. A compositionally biased stretch (low complexity) spans 73–83; that stretch reads QLQQQQQQEHL. The span at 96–110 shows a compositional bias: polar residues; sequence SSRQNQGAPSGNLSN. Low complexity predominate over residues 125-145; the sequence is SVSGNTNHTGSNSSSNSGSNN. A compositionally biased stretch (polar residues) spans 188–204; the sequence is SASSASKLPTHNVQQQH. 3 stretches are compositionally biased toward low complexity: residues 272–287, 309–334, and 393–406; these read SYQH…QSHP, PLLT…SSQH, and SNEE…NSSN. The span at 433 to 450 shows a compositional bias: polar residues; sequence SKPQHPQQAANLNNSCSP. The residue at position 453 (Ser453) is a Phosphoserine. The segment covering 463 to 472 has biased composition (polar residues); that stretch reads PFSTQKQSQT. Over residues 523–536 the composition is skewed to basic and acidic residues; sequence TEQHRMQQDDEPPK. 2 stretches are compositionally biased toward low complexity: residues 549 to 570 and 632 to 641; these read QSNS…SQSS and TTAAVAAPPA. Thr642 carries the post-translational modification Phosphothreonine. The span at 678–688 shows a compositional bias: basic and acidic residues; it reads ERISSPEKPAE. Phosphoserine occurs at positions 682, 749, and 753. The segment covering 755 to 764 has biased composition (polar residues); sequence IPQSRSTSTP. Phosphoserine occurs at positions 793 and 799. Positions 832-860 are enriched in low complexity; it reads STSAAAAAALAARQLSEAASATKSKPAAG. The span at 861–874 shows a compositional bias: basic residues; that stretch reads AKKKNAGVKGKKGS. Over residues 937 to 947 the composition is skewed to basic and acidic residues; sequence HSAEDVNEKQT. Polar residues predominate over residues 1071–1089; the sequence is DSSISYSDDPNESRSQCSS. The C2HC pre-PHD-type; degenerate zinc-finger motif lies at 1089–1131; it reads SVDLLDCSTESKFVETFRGMGKTSENGFEVWLHEDCAVWSNDI. The residue at position 1099 (Ser1099) is a Phosphoserine. Residues 1151 to 1199 form a PHD-type zinc finger; that stretch reads YQCVLCQQTGASICCFQRCCKAAAHVPCGRSANWSLSEEDRKVYCHLHR.

This is an uncharacterized protein from Drosophila melanogaster (Fruit fly).